A 5537-amino-acid chain; its full sequence is Histone-lysine N-methyltransferase 2D (5537 aa).

A disordered region spans residues 1–60 (MDSQKLAGEDKDSEPAADGPAASEDPSATESDLPNPHVGEVSVLSSGSPRLQETPQDCSG). Ser27 is subject to Phosphoserine. Residues 43–57 (VLSSGSPRLQETPQD) are compositionally biased toward polar residues. The segment at 104–149 (GPNEAVLPSEDLSQIGFPEGLTPAHLGEPGGSCWAHHWCAAWSAGV) adopts a C2HC pre-PHD-type 1; degenerate zinc-finger fold. PHD-type zinc fingers lie at residues 170-218 (QRCS…PEHS), 226-276 (EARC…CKVC), and 273-323 (CKVC…CRVC). The RING-type 1; atypical zinc finger occupies 229 to 274 (CAVCEGPGELCDLFFCTSCGHHYHGACLDTALTARKRAGWQCPECK). The RING-type 2; degenerate zinc-finger motif lies at 276 to 321 (CQACRKPGNDSKMLVCETCDKGYHTFCLKPPMEELPAHSWKCKACR). Disordered stretches follow at residues 368–387 (VCSR…EPDA), 393–416 (QGQP…QCEA), 436–1331 (EEMP…RLKS), and 1340–1359 (VVAD…DDDT). The 15 X 5 AA repeats of S/P-P-P-E/P-E/A stretch occupies residues 439-668 (PLLPPPEESP…VSRLSPPPEE (230 aa)). Pro residues predominate over residues 440–473 (LLPPPEESPLSPPPEESPTSPPPEASRLSPPPEE). 3 consecutive repeat copies span residues 442-446 (PPPEE), 460-464 (PPPEA), and 469-473 (PPPEE). Positions 474 to 483 (LPASPLPEAL) are enriched in low complexity. Residues 494-509 (LSPPPEESPLSPPPES) are compositionally biased toward pro residues. 2 tandem repeats follow at residues 496-500 (PPPEE) and 504-508 (SPPPE). Residues 510 to 519 (SPFSPLEESP) are compositionally biased toward low complexity. 2 stretches are compositionally biased toward pro residues: residues 520-547 (LSPP…PLSP) and 554-595 (LSPP…PPPE). 5 tandem repeats follow at residues 521–525 (SPPEE), 555–559 (SPPPE), 564–568 (SPPPE), 573–577 (SPPPE), and 582–586 (SPPPE). Residues 596–607 (ASRLFPPFEESP) are compositionally biased toward low complexity. The span at 608 to 649 (LSPPPEESPLSPPPEASRLSPPPEDSPMSPPPEESPMSPPPE) shows a compositional bias: pro residues. Repeat copies occupy residues 609-613 (SPPPE), 618-622 (SPPPE), 627-631 (SPPPE), and 645-649 (SPPPE). Residues 650–662 (VSRLSPLPVVSRL) show a composition bias toward low complexity. Repeat unit 15 spans residues 663-667 (SPPPE). Residues 663–712 (SPPPEESPLSPPPEESPTSPPPEASRLSPPPEDSPTSPPPEDSPASPPPE) show a composition bias toward pro residues. Positions 713-725 (DSLMSLPLEESPL) are enriched in low complexity. Phosphoserine is present on Ser744. Composition is skewed to basic and acidic residues over residues 745-760 (PRPE…EEPH) and 845-869 (RPEE…KPPE). Composition is skewed to low complexity over residues 889-903 (PSLS…LSEP) and 911-928 (LPEE…LSPQ). Residues 929-940 (LMPPDPLPPPLS) are compositionally biased toward pro residues. Residues 941–954 (PIITAAAPPALSPL) are compositionally biased toward low complexity. Over residues 994–1008 (EPVPPMILPPSPGSP) the composition is skewed to pro residues. A compositionally biased stretch (low complexity) spans 1048–1057 (PLSVPSPLSP). A compositionally biased stretch (basic and acidic residues) spans 1068–1080 (AELHEMETEKVSE). Ser1151 is modified (phosphoserine). Thr1195 carries the phosphothreonine modification. A compositionally biased stretch (polar residues) spans 1207–1216 (EISNLSQGDA). Phosphoserine is present on Ser1249. Thr1267 bears the Phosphothreonine mark. Ser1270 is subject to Phosphoserine. Composition is skewed to basic residues over residues 1289 to 1302 (GRRR…RIKQ) and 1310 to 1329 (GRRR…RARL). PHD-type zinc fingers lie at residues 1377-1430 (QDMC…CIVC), 1427-1477 (CIVC…CVSC), and 1504-1559 (LVTC…CQPY). An RING-type 3; atypical zinc finger spans residues 1507–1557 (CPICHAPYVEEDLLIQCRHCERWMHAGCESLFTEDDVEQAADEGFDCVSCQ). At Ser1606 the chain carries Phosphoserine. Disordered regions lie at residues 1610 to 1767 (KRRQ…LEDM), 1793 to 1889 (GVGR…MESK), 1904 to 2002 (EQHL…NQRS), and 2165 to 2683 (PQVP…QRQR). Basic and acidic residues predominate over residues 1637-1666 (PDDKKDGDLDTDELLKGEGGVEHMECEIKL). Ser1671 is subject to Phosphoserine. Residues 1675–1685 (EPGKEETEESK) are compositionally biased toward basic and acidic residues. Composition is skewed to basic residues over residues 1702 to 1712 (RQRKSHTRTKK) and 1753 to 1762 (KQQRRGRKKS). Basic and acidic residues-rich tracts occupy residues 1806–1825 (AKGD…KGDD) and 1832–1841 (EESRGLEGKA). Ser1820 and Ser1834 each carry phosphoserine. A phosphothreonine mark is found at Thr1843 and Thr1865. Positions 1874–1889 (DLDRISTEELPKMESK) are enriched in basic and acidic residues. The segment covering 1979–1990 (TTPSTPTTPTTE) has biased composition (low complexity). The span at 2190–2209 (PTAPPTYPPYPSPTGAPAQP) shows a compositional bias: pro residues. A Phosphoserine modification is found at Ser2239. Thr2240 carries the post-translational modification Phosphothreonine. At Lys2246 the chain carries N6-acetyllysine. A phosphoserine mark is found at Ser2260 and Ser2274. The span at 2280 to 2292 (ESRKALEVKKEEL) shows a compositional bias: basic and acidic residues. A phosphoserine mark is found at Ser2309, Ser2311, and Ser2342. Composition is skewed to pro residues over residues 2350-2365 (QEPP…PPSH) and 2379-2393 (AQPP…PPPE). Composition is skewed to low complexity over residues 2409–2431 (SRVP…RPLS) and 2494–2505 (FPAALPAGPAGE). The residue at position 2535 (Arg2535) is an Asymmetric dimethylarginine. Residues 2547–2560 (LKPPVPQPGLPPPH) show a composition bias toward pro residues. A compositionally biased stretch (polar residues) spans 2574–2584 (KPQSTNYTVAT). Positions 2589 to 2609 (PSGSPLGPSSGSTGESYGLSP) are enriched in low complexity. Residues 2610 to 2621 (LRPPSVLPPPAP) show a composition bias toward pro residues. Ser2640 is modified (phosphoserine). Residues 2669 to 2707 (MSGLSQTELEKQRQRQRLRELLIRQQIQRNTLRQEKETA) adopt a coiled-coil conformation. Residues 2686 to 2690 (LRELL) carry the LXXLL motif 1 motif. Disordered regions lie at residues 2697–2814 (RNTL…QQQQ) and 2835–2996 (ARFP…LDDD). Positions 2707–2722 (AAAAAGAVGPPGSWGA) are enriched in low complexity. Polar residues-rich tracts occupy residues 2733–2746 (SRGQ…QDKS) and 2781–2790 (PSSMDVNSRQ). Position 2836 is an asymmetric dimethylarginine (Arg2836). Residues 2931-2940 (PQKPSAPPAP) are compositionally biased toward pro residues. An LXXLL motif 2 motif is present at residues 3038-3042 (LDDLL). The segment at 3078 to 3110 (EKAEREALLRGVEPGPLGPEERPPPAADASEPR) is disordered. N6-acetyllysine is present on Lys3079. Residue Ser3130 is modified to Phosphoserine. Disordered stretches follow at residues 3147–3209 (ANSL…GSSL) and 3263–3339 (KQQL…AHAL). Thr3197 carries the phosphothreonine modification. Low complexity-rich tracts occupy residues 3198–3209 (PSPLSGPGGSSL), 3263–3289 (KQQL…LSAP), and 3301–3320 (GSSP…LAGA). Ser3199 is subject to Phosphoserine. A coiled-coil region spans residues 3249–3282 (IEDLLEHEKKELQKKQQLSAQLQPAQQQQQQQQQ). The span at 3325 to 3334 (LPQPLMPTQP) shows a compositional bias: pro residues. Lys3433 is modified (N6-acetyllysine). Disordered stretches follow at residues 3462–3499 (LSGG…TFAQ) and 3596–3673 (RNKQ…GPFL). Residues 3562–3614 (EKLKLVTEQQSKIQKQLDQVRKQQKEHTNLMAEYRNKQQQQQQQQQQQQQQHS) adopt a coiled-coil conformation. Composition is skewed to low complexity over residues 3599 to 3612 (QQQQ…QQQQ) and 3631 to 3643 (LPGQ…GLQP). A coiled-coil region spans residues 3714–3750 (RLLQERQLQLQQQRMQLAQKLQQQQQQQQQQQHLLGQ). The residue at position 3727 (Arg3727) is an Asymmetric dimethylarginine. The interval 3758 to 3802 (QQGPGVQTNQALGPKPQGLMPPSSHQGLLVQQLSPQPPQGPQGML) is disordered. A coiled-coil region spans residues 3897-3975 (LQQLQQQQQL…FQQQQQQQQM (79 aa)). Residues 3984 to 4191 (LLSPQQQQQQ…GQGLPGVGIM (208 aa)) form a disordered region. Over residues 4012 to 4023 (PGALGPTLLLTG) the composition is skewed to low complexity. Over residues 4024-4045 (KEQNTVDPAVSSEATEGPSTHQ) the composition is skewed to polar residues. The span at 4073–4108 (SQLLLVQPQPQPQPSSLQLQPPLRLPGQQQQQVSLL) shows a compositional bias: low complexity. Residues 4111 to 4120 (AGGGSHGQLG) are compositionally biased toward gly residues. Residues 4137-4154 (PSVSLGDQPGSMTQNLLG) are compositionally biased toward polar residues. The residue at position 4198 (Arg4198) is an Asymmetric dimethylarginine. Ser4215 is subject to Phosphoserine. The short motif at 4222 to 4226 (LQALL) is the LXXLL motif 3 element. Disordered regions lie at residues 4233 to 4398 (QSQA…VPGH) and 4410 to 4452 (ASQL…LLLA). The span at 4237 to 4251 (VRQTPPYQEPGTQTS) shows a compositional bias: polar residues. Over residues 4252-4282 (PLQGLLGCQPQLGGFPGPQTGPLQELGAGPR) the composition is skewed to low complexity. Positions 4253 to 4257 (LQGLL) match the LXXLL motif 4 motif. The span at 4283-4293 (PQGPPRLPAPP) shows a compositional bias: pro residues. Composition is skewed to low complexity over residues 4294 to 4305 (GALSTGPVLGPV) and 4320 to 4331 (PSQLPSPSSQLP). Positions 4338 to 4357 (PTHPGTPKPQGPTLEPPPGR) are enriched in pro residues. Phosphoserine is present on Ser4359. The LXXLL motif 5 signature appears at 4463–4467 (LQKLL). Lys4465 carries the N6-acetyllysine modification. 2 disordered regions span residues 4503 to 4544 (QGTP…KEDG) and 4613 to 4727 (KNNL…HLGS). The segment covering 4619–4633 (PPTPPSSLPPTPPPS) has biased composition (pro residues). A compositionally biased stretch (basic and acidic residues) spans 4648–4673 (LGEHPKDAASARDSERALRDTSEVKS). Ser4738 is modified (phosphoserine). Lys4756 is covalently cross-linked (Glycyl lysine isopeptide (Lys-Gly) (interchain with G-Cter in SUMO2)). Lys4776 is modified (N6-acetyllysine). Residues Ser4822 and Ser4849 each carry the phosphoserine modification. Positions 4822-4857 (SPARAGTEPKKGEAEGPGGKEKGLEGKSPDTGPDWL) are disordered. The span at 4828-4849 (TEPKKGEAEGPGGKEKGLEGKS) shows a compositional bias: basic and acidic residues. Lys4880 is covalently cross-linked (Glycyl lysine isopeptide (Lys-Gly) (interchain with G-Cter in SUMO2)). Residues 4905–4980 (QLSAPPPEEP…GEDSRPPRLK (76 aa)) form a disordered region. Over residues 4908–4931 (APPPEEPSPPPSPLAPSPASPPTE) the composition is skewed to pro residues. Residues 4932–4941 (PLVELPTEPL) show a composition bias toward low complexity. The span at 4966-4976 (RPPEEGEDSRP) shows a compositional bias: basic and acidic residues. Residues 4990–4994 (LRLLL) carry the LXXLL motif 6 motif. The C2HC pre-PHD-type 2 zinc-finger motif lies at 5029–5069 (MRRCCFCHEEGDGATDGPARLLNLDLDLWVHLNCALWSTEV). A PHD-type 7 zinc finger spans residues 5090-5137 (TKCSLCQRTGATSSCNRMRCPNVYHFACAIRAKCMFFKDKTMLCPMHK). Residues 5175 to 5235 (LHMFRVGGLV…CCYRCSIGEN (61 aa)) form the FYR N-terminal domain. The FYR C-terminal domain occupies 5236-5321 (NGRPEFVIKV…ESCQNYLFRY (86 aa)). The WDR5 interaction motif (WIN) signature appears at 5337-5342 (GCARSE). In terms of domain architecture, SET spans 5397-5513 (NNVYLARSRI…KGEELTYDYQ (117 aa)). Residues Tyr5451 and 5474–5475 (NH) each bind S-adenosyl-L-methionine. Residues Cys5477, Cys5525, Cys5527, and Cys5532 each coordinate Zn(2+). The region spanning 5521 to 5537 (HKIPCHCGAWNCRKWMN) is the Post-SET domain.

This sequence belongs to the class V-like SAM-binding methyltransferase superfamily. Histone-lysine methyltransferase family. TRX/MLL subfamily. As to quaternary structure, component of the MLL2 complex (also named ASCOM complex), at least composed of catalytic subunit KMT2D/MLL2, ASH2L, RBBP5, WDR5, NCOA6, DPY30, KDM6A, PAXIP1/PTIP, PAGR1 and alpha- and beta-tubulin. Forms a core complex with the evolutionary conserved subcomplex WRAD composed of WDR5, RBBP5, ASH2L/ASH2 and DPY30 subunits; WRAD differentially stimulates the methyltransferase activity. Interacts with ESR1; interaction is direct. Interacts (via WIN motif) with WDR5. Expressed in most adult tissues, including a variety of hematoipoietic cells, with the exception of the liver.

The protein resides in the nucleus. It catalyses the reaction L-lysyl(4)-[histone H3] + S-adenosyl-L-methionine = N(6)-methyl-L-lysyl(4)-[histone H3] + S-adenosyl-L-homocysteine + H(+). Functionally, histone methyltransferase that catalyzes methyl group transfer from S-adenosyl-L-methionine to the epsilon-amino group of 'Lys-4' of histone H3 (H3K4). Part of chromatin remodeling machinery predominantly forms H3K4me1 methylation marks at active chromatin sites where transcription and DNA repair take place. Acts as a coactivator for estrogen receptor by being recruited by ESR1, thereby activating transcription. In Homo sapiens (Human), this protein is Histone-lysine N-methyltransferase 2D (KMT2D).